The following is a 312-amino-acid chain: Methionyl-tRNA formyltransferase (312 aa).

109-112 (SLLP) contacts (6S)-5,6,7,8-tetrahydrofolate.

This sequence belongs to the Fmt family.

The catalysed reaction is L-methionyl-tRNA(fMet) + (6R)-10-formyltetrahydrofolate = N-formyl-L-methionyl-tRNA(fMet) + (6S)-5,6,7,8-tetrahydrofolate + H(+). In terms of biological role, attaches a formyl group to the free amino group of methionyl-tRNA(fMet). The formyl group appears to play a dual role in the initiator identity of N-formylmethionyl-tRNA by promoting its recognition by IF2 and preventing the misappropriation of this tRNA by the elongation apparatus. This chain is Methionyl-tRNA formyltransferase, found in Listeria innocua serovar 6a (strain ATCC BAA-680 / CLIP 11262).